The sequence spans 901 residues: Protein translocase subunit SecA (901 aa).

ATP is bound by residues glutamine 87, 105 to 109 (GEGKT), and aspartate 512. The tract at residues 855 to 891 (QQLSHQDDETAAAAALAEQTGERKVGRNDPCPCGSGK) is disordered. Positions 885, 887, 896, and 897 each coordinate Zn(2+).

This sequence belongs to the SecA family. As to quaternary structure, monomer and homodimer. Part of the essential Sec protein translocation apparatus which comprises SecA, SecYEG and auxiliary proteins SecDF-YajC and YidC. Requires Zn(2+) as cofactor.

It localises to the cell inner membrane. The protein resides in the cytoplasm. It catalyses the reaction ATP + H2O + cellular proteinSide 1 = ADP + phosphate + cellular proteinSide 2.. Part of the Sec protein translocase complex. Interacts with the SecYEG preprotein conducting channel. Has a central role in coupling the hydrolysis of ATP to the transfer of proteins into and across the cell membrane, serving both as a receptor for the preprotein-SecB complex and as an ATP-driven molecular motor driving the stepwise translocation of polypeptide chains across the membrane. This is Protein translocase subunit SecA from Cronobacter sakazakii (strain ATCC BAA-894) (Enterobacter sakazakii).